Here is a 2033-residue protein sequence, read N- to C-terminus: Envoplakin (2033 aa).

The span at 1–27 shows a compositional bias: low complexity; sequence MFKGLSKGSQGKGSPKGSPAKGSPKGS. Disordered regions lie at residues 1-37 and 65-85; these read MFKG…AATQ and QQDR…ETGR. The interval 1–841 is globular 1; that stretch reads MFKGLSKGSQ…LEPTLAVSAP (841 aa). Residues 12–28 are 4 X 4 AA tandem repeats of K-G-S-P; the sequence is KGSPKGSPAKGSPKGSP. Residues 71 to 84 are compositionally biased toward polar residues; that stretch reads SEQSQALQHQQETG. A Spectrin repeat occupies 229 to 330; it reads YTHLQGCTRQ…LCICQETQLQ (102 aa). The segment covering 388-401 has biased composition (basic and acidic residues); that stretch reads TERATGDLQRRSRD. 2 disordered regions span residues 388–418 and 891–916; these read TERA…PLHV and SEDI…ESEA. In terms of domain architecture, SH3 spans 413–470; sequence QQPLHVDSICDWDSGEVQLLQGERYKLVDNTDPHAWVVQGPGGETKRAPAACFCIPAP. Residues 842 to 1673 form a central fibrous rod domain region; it reads KRPRVAPLQE…AKVSREELSQ (832 aa). A coiled-coil region spans residues 845–1135; sequence RVAPLQESIQ…AISSVEPKVI (291 aa). The segment covering 891-902 has biased composition (basic and acidic residues); it reads SEDIRRTHDAKQ. A Plectin 1 repeat occupies 1185 to 1226; sequence KQRPKVQLQERVHEIFQVDPETEQEITRLKAKLQEMAGKRSG. Phosphoserine is present on S1575. The span at 1614–1623 shows a compositional bias: low complexity; the sequence is QEESKLLSQK. A disordered region spans residues 1614 to 1636; that stretch reads QEESKLLSQKTESERQKAAQRGQ. Positions 1674–2033 are globular 2; sequence ETQTRETNLS…ASPTVPRSLR (360 aa). The Plectin 2 repeat unit spans residues 1678–1713; sequence RETNLSTKISILEPETGKDMSPYEAYKRGIIDRGQY. Phosphoserine is present on S1799. Plectin repeat units follow at residues 1818–1855, 1856–1893, 1894–1931, 1932–1969, and 1970–2007; these read LGLG…PITG, QKLL…NTST, QRLL…RESV, LPHL…EELA, and QLLQ…PLSG. Position 2025 is a phosphoserine (S2025).

Belongs to the plakin or cytolinker family. In terms of assembly, may form a homodimer or a heterodimer with PPL. Exclusively expressed in stratified squamous epithelia.

It is found in the cell junction. It localises to the desmosome. The protein resides in the cornified envelope. Its subcellular location is the cytoplasm. The protein localises to the cytoskeleton. In terms of biological role, component of the cornified envelope of keratinocytes. May link the cornified envelope to desmosomes and intermediate filaments. The sequence is that of Envoplakin (EVPL) from Homo sapiens (Human).